Consider the following 684-residue polypeptide: Acetyl-coenzyme A synthetase 2 (684 aa).

Residues 207 to 210 (RGGK) and Thr-326 contribute to the CoA site. ATP is bound by residues 402-404 (GEP), 426-431 (DTMWQT), Asp-517, and Arg-532. Ser-540 contacts CoA. Arg-543 serves as a coordination point for ATP. CoA is bound at residue Arg-613.

This sequence belongs to the ATP-dependent AMP-binding enzyme family.

The catalysed reaction is acetate + ATP + CoA = acetyl-CoA + AMP + diphosphate. This Kluyveromyces lactis (strain ATCC 8585 / CBS 2359 / DSM 70799 / NBRC 1267 / NRRL Y-1140 / WM37) (Yeast) protein is Acetyl-coenzyme A synthetase 2 (ACS2).